Consider the following 213-residue polypeptide: Large ribosomal subunit protein uL3 (213 aa).

The interval G131–R155 is disordered. Polar residues predominate over residues H135–D152. The residue at position 151 (Q151) is an N5-methylglutamine.

The protein belongs to the universal ribosomal protein uL3 family. As to quaternary structure, part of the 50S ribosomal subunit. Forms a cluster with proteins L14 and L19. Methylated by PrmB.

In terms of biological role, one of the primary rRNA binding proteins, it binds directly near the 3'-end of the 23S rRNA, where it nucleates assembly of the 50S subunit. The chain is Large ribosomal subunit protein uL3 from Agrobacterium fabrum (strain C58 / ATCC 33970) (Agrobacterium tumefaciens (strain C58)).